The following is a 211-amino-acid chain: Probable nicotinate-nucleotide adenylyltransferase (211 aa).

This sequence belongs to the NadD family.

The catalysed reaction is nicotinate beta-D-ribonucleotide + ATP + H(+) = deamido-NAD(+) + diphosphate. Its pathway is cofactor biosynthesis; NAD(+) biosynthesis; deamido-NAD(+) from nicotinate D-ribonucleotide: step 1/1. Its function is as follows. Catalyzes the reversible adenylation of nicotinate mononucleotide (NaMN) to nicotinic acid adenine dinucleotide (NaAD). This Corynebacterium kroppenstedtii (strain DSM 44385 / JCM 11950 / CIP 105744 / CCUG 35717) protein is Probable nicotinate-nucleotide adenylyltransferase.